A 270-amino-acid polypeptide reads, in one-letter code: MVKVAVTGALGRMGSGIIKTITETDGLDVVAAIDIPNHPKKGQDVGELTGLGKIGVALSTSDELEAVLKESGAEVLVDFTAAAPCVQTAKTASKLGVNLVIGTTGFTPEQRAEMEDAISKNKVAATISQNYAVGVNIFFKTLELLAQKLGDYDIEILEMHHKFKKDAPSGTALRAAEIIQNNLNRDSNVIYGREGITGERTKEEICIHALRGGDIVGDHSVIFTTEGERLELSHRVTSRQSLVSGAVLAIKFVAQKKEGIYNTFDVLDLN.

Residues 8–13, aspartate 34, 102–104, and 128–131 each bind NAD(+); these read GALGRM, GTT, and SQNY. Histidine 160 serves as the catalytic Proton donor/acceptor. Histidine 161 serves as a coordination point for (S)-2,3,4,5-tetrahydrodipicolinate. The active-site Proton donor is lysine 164. 170-171 is a (S)-2,3,4,5-tetrahydrodipicolinate binding site; it reads GT.

It belongs to the DapB family.

It localises to the cytoplasm. It carries out the reaction (S)-2,3,4,5-tetrahydrodipicolinate + NAD(+) + H2O = (2S,4S)-4-hydroxy-2,3,4,5-tetrahydrodipicolinate + NADH + H(+). It catalyses the reaction (S)-2,3,4,5-tetrahydrodipicolinate + NADP(+) + H2O = (2S,4S)-4-hydroxy-2,3,4,5-tetrahydrodipicolinate + NADPH + H(+). It participates in amino-acid biosynthesis; L-lysine biosynthesis via DAP pathway; (S)-tetrahydrodipicolinate from L-aspartate: step 4/4. In terms of biological role, catalyzes the conversion of 4-hydroxy-tetrahydrodipicolinate (HTPA) to tetrahydrodipicolinate. The sequence is that of 4-hydroxy-tetrahydrodipicolinate reductase from Methanococcus maripaludis (strain DSM 14266 / JCM 13030 / NBRC 101832 / S2 / LL).